The primary structure comprises 119 residues: Small ribosomal subunit protein bS6 (119 aa).

Positions 99-119 are disordered; that stretch reads KKEKKQSRKEEGSENSEKVEE.

This sequence belongs to the bacterial ribosomal protein bS6 family.

Binds together with bS18 to 16S ribosomal RNA. The protein is Small ribosomal subunit protein bS6 of Thermosipho melanesiensis (strain DSM 12029 / CIP 104789 / BI429).